Consider the following 217-residue polypeptide: Ribose-5-phosphate isomerase A (217 aa).

Residues 28–31 (TGST), 81–84 (DGAD), and 94–97 (KGGG) contribute to the substrate site. The Proton acceptor role is filled by Glu-103. Lys-121 is a binding site for substrate.

Belongs to the ribose 5-phosphate isomerase family. As to quaternary structure, homodimer.

The enzyme catalyses aldehydo-D-ribose 5-phosphate = D-ribulose 5-phosphate. The protein operates within carbohydrate degradation; pentose phosphate pathway; D-ribose 5-phosphate from D-ribulose 5-phosphate (non-oxidative stage): step 1/1. Functionally, catalyzes the reversible conversion of ribose-5-phosphate to ribulose 5-phosphate. In Aeromonas hydrophila subsp. hydrophila (strain ATCC 7966 / DSM 30187 / BCRC 13018 / CCUG 14551 / JCM 1027 / KCTC 2358 / NCIMB 9240 / NCTC 8049), this protein is Ribose-5-phosphate isomerase A.